A 544-amino-acid polypeptide reads, in one-letter code: Histone-arginine methyltransferase CARMER (544 aa).

The SAM-dependent MTase PRMT-type domain maps to Ala150–His459. S-adenosyl-L-methionine-binding residues include Gln163, Arg172, Gly196, Glu218, Glu247, and Thr275. Residues Asp505–Leu520 are compositionally biased toward polar residues. The tract at residues Asp505–Asn527 is disordered. An Asymmetric dimethylarginine; by autocatalysis modification is found at Arg514.

It belongs to the class I-like SAM-binding methyltransferase superfamily. Protein arginine N-methyltransferase family. Homodimer. The dimethylated protein is the major form.

It is found in the cytoplasm. Its subcellular location is the nucleus. It catalyses the reaction L-arginyl-[protein] + 2 S-adenosyl-L-methionine = N(omega),N(omega)-dimethyl-L-arginyl-[protein] + 2 S-adenosyl-L-homocysteine + 2 H(+). Functionally, methylates (mono- and asymmetric dimethylation) the guanidino nitrogens of arginyl residues in proteins. May methylate histone H3 at 'Arg-17' and activate transcription via chromatin remodeling. The chain is Histone-arginine methyltransferase CARMER (Art4) from Drosophila grimshawi (Hawaiian fruit fly).